A 635-amino-acid chain; its full sequence is Extracellular metalloproteinase 1 (635 aa).

The signal sequence occupies residues 1 to 19 (MHGLLLAAGLLSLPLHVLA). The propeptide occupies 20-246 (HPQPSTSTSL…VHNVVDYVAH (227 aa)). Asparagine 287 is a glycosylation site (N-linked (GlcNAc...) asparagine). Histidine 430 provides a ligand contact to Zn(2+). Glutamate 431 is an active-site residue. Position 434 (histidine 434) interacts with Zn(2+). N-linked (GlcNAc...) asparagine glycosylation is found at asparagine 475, asparagine 594, and asparagine 623.

It belongs to the peptidase M36 family. Requires Zn(2+) as cofactor.

It is found in the secreted. Secreted metalloproteinase probably acting as a virulence factor. The chain is Extracellular metalloproteinase 1 (MEP1) from Arthroderma benhamiae (Trichophyton mentagrophytes).